Consider the following 488-residue polypeptide: 3-octaprenyl-4-hydroxybenzoate carboxy-lyase (488 aa).

Residue Asn172 coordinates Mn(2+). Prenylated FMN-binding positions include 175-177 (IYR), 189-191 (RWL), and 194-195 (RG). A Mn(2+)-binding site is contributed by Glu238. Asp287 acts as the Proton donor in catalysis.

It belongs to the UbiD family. Homohexamer. Prenylated FMN is required as a cofactor. Requires Mn(2+) as cofactor.

It localises to the cell membrane. The enzyme catalyses a 4-hydroxy-3-(all-trans-polyprenyl)benzoate + H(+) = a 2-(all-trans-polyprenyl)phenol + CO2. The protein operates within cofactor biosynthesis; ubiquinone biosynthesis. Its function is as follows. Catalyzes the decarboxylation of 3-octaprenyl-4-hydroxy benzoate to 2-octaprenylphenol, an intermediate step in ubiquinone biosynthesis. The chain is 3-octaprenyl-4-hydroxybenzoate carboxy-lyase from Pseudomonas fluorescens (strain ATCC BAA-477 / NRRL B-23932 / Pf-5).